Consider the following 89-residue polypeptide: Small ribosomal subunit protein uS15 (89 aa).

It belongs to the universal ribosomal protein uS15 family. In terms of assembly, part of the 30S ribosomal subunit. Forms a bridge to the 50S subunit in the 70S ribosome, contacting the 23S rRNA.

Its function is as follows. One of the primary rRNA binding proteins, it binds directly to 16S rRNA where it helps nucleate assembly of the platform of the 30S subunit by binding and bridging several RNA helices of the 16S rRNA. In terms of biological role, forms an intersubunit bridge (bridge B4) with the 23S rRNA of the 50S subunit in the ribosome. This Oleidesulfovibrio alaskensis (strain ATCC BAA-1058 / DSM 17464 / G20) (Desulfovibrio alaskensis) protein is Small ribosomal subunit protein uS15.